We begin with the raw amino-acid sequence, 397 residues long: Na(+)/H(+) antiporter NhaA 1 (397 aa).

12 helical membrane passes run 15-35 (FQLE…ALII), 42-62 (YLYG…LNIA), 65-85 (LLLW…GLEV), 101-121 (ILPA…YWFI), 129-149 (VAGW…VLAL), 160-180 (LFLM…IALF), 183-203 (GTLS…LVAM), 219-241 (LILW…ALAF), 265-285 (WVAY…SLAG), 299-319 (ITIG…WVAV), 335-355 (ILGV…VGSL), and 370-390 (MGIL…TAMA).

Belongs to the NhaA Na(+)/H(+) (TC 2.A.33) antiporter family.

The protein resides in the cell inner membrane. It carries out the reaction Na(+)(in) + 2 H(+)(out) = Na(+)(out) + 2 H(+)(in). In terms of biological role, na(+)/H(+) antiporter that extrudes sodium in exchange for external protons. The polypeptide is Na(+)/H(+) antiporter NhaA 1 (Pseudomonas putida (strain ATCC 47054 / DSM 6125 / CFBP 8728 / NCIMB 11950 / KT2440)).